A 332-amino-acid chain; its full sequence is 2,3-diketo-L-gulonate reductase (332 aa).

The Proton donor role is filled by His44. NAD(+) is bound by residues 168–174 (ITMVDMS), 224–225 (WK), and 304–306 (GHE).

The protein belongs to the LDH2/MDH2 oxidoreductase family. DlgD subfamily. In terms of assembly, homodimer.

The protein localises to the cytoplasm. It catalyses the reaction 3-dehydro-L-gulonate + NAD(+) = 2,3-dioxo-L-gulonate + NADH + H(+). The catalysed reaction is 3-dehydro-L-gulonate + NADP(+) = 2,3-dioxo-L-gulonate + NADPH + H(+). In terms of biological role, catalyzes the reduction of 2,3-diketo-L-gulonate in the presence of NADH, to form 3-keto-L-gulonate. This chain is 2,3-diketo-L-gulonate reductase, found in Salmonella paratyphi C (strain RKS4594).